A 415-amino-acid polypeptide reads, in one-letter code: Histidine--tRNA ligase (415 aa).

It belongs to the class-II aminoacyl-tRNA synthetase family. As to quaternary structure, homodimer.

It localises to the cytoplasm. The catalysed reaction is tRNA(His) + L-histidine + ATP = L-histidyl-tRNA(His) + AMP + diphosphate + H(+). The chain is Histidine--tRNA ligase from Clostridium botulinum (strain ATCC 19397 / Type A).